Here is a 777-residue protein sequence, read N- to C-terminus: MNVTKDENPRSRSQDLHLFHAWMMLIMTVLFLPVTETSKQNIPRLKLTYKDLLLSNTCIPFLGSSEGLDFQTLLLDEERGILLLGAKDHVFLLSLVDLNKNFKKIYWPAAKERVELCKLAGKDANAECANFIRVLQPYNKTHVYVCGTGAFHPLCGYIDLGANKEELIFKLDTHNLESGRLKCPFDPQQPFASVMTDEHLYSGTASDFLGKDTAFTRSLGLMQDHHSIRTDISEHHWLNGAKFIGTFPIPDTYNPDDDKIYFFFRESSQEGSTSDRSILSRVGRVCKNDVGGQRSLINKWTTFLKARLICSIPGSDGADTHFDELQDIYLLPTRDERNPVVYGVFTTTSSIFKGSAVCVYSMADIRAVFNGPYAHKESADHRWVQYDGRIPYPRPGTCPSKTYDPLIKSTRDFPDDVISFIRRHPVMYKSVYPVAGAPTFKRINVDYRLTQIVVDHVVAEDGQYDVMFLGTDIGTVLKVVSISKEKWNMEEVVLEELQVFKHPTAILNMELSLKQQQLYVGSWDGLVQLSLHRCDTYGKACADCCLARDPYCAWDGNACSRYAPTSKRRARRQDVKYGDPITQCWDIEDSISHETADEKVIFGIEFNSTFLECIPKSQQASVEWYIQRSGDEHREELKPDERIIKTDYGLLIRSLQKKDSGMYYCKAQEHTFIHTIVKLTLNVIENEQMENTQRAEYQEGQVKDLLAESRLRYKDYIQILSSPNFSLDQYCEQMWYKEKRRQRNKGSPKWKHMQEMKKKRNRRHHRDLDELQRSVAT.

The first 37 residues, 1-37, serve as a signal peptide directing secretion; it reads MNVTKDENPRSRSQDLHLFHAWMMLIMTVLFLPVTET. The Sema domain maps to 44-531; it reads RLKLTYKDLL…SWDGLVQLSL (488 aa). A disulfide bond links cysteine 117 and cysteine 128. N-linked (GlcNAc...) asparagine glycosylation occurs at asparagine 139. 4 disulfides stabilise this stretch: cysteine 146–cysteine 155, cysteine 286–cysteine 398, cysteine 310–cysteine 358, and cysteine 534–cysteine 552. Positions 533–585 constitute a PSI domain; that stretch reads RCDTYGKACADCCLARDPYCAWDGNACSRYAPTSKRRARRQDVKYGDPITQCW. Positions 592-680 constitute an Ig-like C2-type domain; the sequence is SHETADEKVI…TFIHTIVKLT (89 aa). 2 N-linked (GlcNAc...) asparagine glycosylation sites follow: asparagine 607 and asparagine 724. A disulfide bond links cysteine 665 and cysteine 731. Basic residues predominate over residues 740 to 765; sequence RRQRNKGSPKWKHMQEMKKKRNRRHH. The interval 740–777 is disordered; it reads RRQRNKGSPKWKHMQEMKKKRNRRHHRDLDELQRSVAT. The span at 766–777 shows a compositional bias: basic and acidic residues; the sequence is RDLDELQRSVAT.

Belongs to the semaphorin family.

The protein localises to the secreted. Its function is as follows. Induces the collapse and paralysis of neuronal growth cones. Could potentially act as repulsive cues toward specific neuronal populations. Binds to neuropilin. In Mus musculus (Mouse), this protein is Semaphorin-3D (Sema3d).